We begin with the raw amino-acid sequence, 423 residues long: Dihydroorotase-like protein (423 aa).

Belongs to the metallo-dependent hydrolases superfamily. DHOase family. PyrC' subfamily. As to quaternary structure, heterododecamer of 6 active PyrB subunits and 6 non-catalytic PyrC' subunits.

In terms of biological role, non-functional DHOase. The sequence is that of Dihydroorotase-like protein (pyrC') from Pseudomonas aeruginosa (strain ATCC 15692 / DSM 22644 / CIP 104116 / JCM 14847 / LMG 12228 / 1C / PRS 101 / PAO1).